A 109-amino-acid chain; its full sequence is uncharacterized protein (109 aa).

An N-terminal signal peptide occupies residues 1–21 (MEKSICTSVLVLGLFISSAIG).

As to expression, prismatic layer of shell (at protein level). Expressed primarily in the mantle with highest level in the mantle edge and lower level in the mantle pallium.

It localises to the secreted. This is an uncharacterized protein from Margaritifera margaritifera (Freshwater pearl mussel).